The chain runs to 817 residues: Protein EFR3 homolog B (817 aa).

3 positions are modified to phosphoserine: Ser-212, Ser-214, and Ser-216.

It belongs to the EFR3 family. Component of a phosphatidylinositol 4-kinase (PI4K) complex, composed of PI4KA, EFR3 (EFR3A or EFR3B), TTC7 (TTC7A or TTC7B) and HYCC (HYCC1 or HYCC2). In terms of processing, palmitoylated at its N-terminus, anchoring the protein to the plasma membrane.

The protein localises to the cell membrane. It is found in the cytoplasm. The protein resides in the cytosol. Functionally, component of a complex required to localize phosphatidylinositol 4-kinase (PI4K) to the plasma membrane. The complex acts as a regulator of phosphatidylinositol 4-phosphate (PtdIns(4)P) synthesis. In the complex, EFR3B probably acts as the membrane-anchoring component. Also involved in responsiveness to G-protein-coupled receptors; it is however unclear whether this role is direct or indirect. The polypeptide is Protein EFR3 homolog B (Homo sapiens (Human)).